A 345-amino-acid polypeptide reads, in one-letter code: Protein RecA (345 aa).

Residue 66–73 (GPESSGKT) coordinates ATP.

It belongs to the RecA family.

It localises to the cytoplasm. In terms of biological role, can catalyze the hydrolysis of ATP in the presence of single-stranded DNA, the ATP-dependent uptake of single-stranded DNA by duplex DNA, and the ATP-dependent hybridization of homologous single-stranded DNAs. It interacts with LexA causing its activation and leading to its autocatalytic cleavage. The polypeptide is Protein RecA (Frankia casuarinae (strain DSM 45818 / CECT 9043 / HFP020203 / CcI3)).